The following is a 121-amino-acid chain: Large ribosomal subunit protein bL19 (121 aa).

It belongs to the bacterial ribosomal protein bL19 family.

In terms of biological role, this protein is located at the 30S-50S ribosomal subunit interface and may play a role in the structure and function of the aminoacyl-tRNA binding site. This chain is Large ribosomal subunit protein bL19, found in Neisseria meningitidis serogroup C (strain 053442).